The chain runs to 248 residues: mRNA-decapping protein OPG122 (248 aa).

A Nudix hydrolase domain is found at 45-227; that stretch reads HKRVSVSAIL…IAKYALDTAK (183 aa). The Nudix box motif lies at 125–147; that stretch reads GGIPKRGENVPECLSREIKEEVN.

The protein belongs to the Nudix hydrolase family. Interacts with the late transcription elongation factor VLTF-4/OPG110. Interacts with the late transcription factors VLTF-1. It depends on Mg(2+) as a cofactor. Requires Mn(2+) as cofactor.

The protein resides in the host mitochondrion. Acts with RNA polymerase to initiate transcription from late gene promoters. The sequence is that of mRNA-decapping protein OPG122 (OPG122) from Cynomys gunnisoni (Gunnison's prairie dog).